The primary structure comprises 138 residues: Putative pre-16S rRNA nuclease (138 aa).

This sequence belongs to the YqgF nuclease family.

Its subcellular location is the cytoplasm. Functionally, could be a nuclease involved in processing of the 5'-end of pre-16S rRNA. In Caldicellulosiruptor saccharolyticus (strain ATCC 43494 / DSM 8903 / Tp8T 6331), this protein is Putative pre-16S rRNA nuclease.